A 126-amino-acid polypeptide reads, in one-letter code: Large ribosomal subunit protein bL12 (126 aa).

Positions 36–55 are enriched in low complexity; it reads APAPAAAPAAGGDQGGAEAA. A disordered region spans residues 36 to 57; the sequence is APAPAAAPAAGGDQGGAEAAEQ.

The protein belongs to the bacterial ribosomal protein bL12 family. Homodimer. Part of the ribosomal stalk of the 50S ribosomal subunit. Forms a multimeric L10(L12)X complex, where L10 forms an elongated spine to which 2 to 4 L12 dimers bind in a sequential fashion. Binds GTP-bound translation factors.

Forms part of the ribosomal stalk which helps the ribosome interact with GTP-bound translation factors. Is thus essential for accurate translation. The chain is Large ribosomal subunit protein bL12 from Natranaerobius thermophilus (strain ATCC BAA-1301 / DSM 18059 / JW/NM-WN-LF).